Here is a 259-residue protein sequence, read N- to C-terminus: ATP synthase subunit a (259 aa).

Helical transmembrane passes span 37–57 (LSIT…FLFM), 101–121 (YFPA…LGLI), 131–151 (LVVT…LAIV), 157–177 (FIGF…MVPI), 203–223 (VLAI…LMPA), and 232–252 (FELF…CVYI).

Belongs to the ATPase A chain family. In terms of assembly, F-type ATPases have 2 components, CF(1) - the catalytic core - and CF(0) - the membrane proton channel. CF(1) has five subunits: alpha(3), beta(3), gamma(1), delta(1), epsilon(1). CF(0) has three main subunits: a(1), b(2) and c(9-12). The alpha and beta chains form an alternating ring which encloses part of the gamma chain. CF(1) is attached to CF(0) by a central stalk formed by the gamma and epsilon chains, while a peripheral stalk is formed by the delta and b chains.

It is found in the cell inner membrane. Key component of the proton channel; it plays a direct role in the translocation of protons across the membrane. The sequence is that of ATP synthase subunit a from Magnetococcus marinus (strain ATCC BAA-1437 / JCM 17883 / MC-1).